The sequence spans 383 residues: tRNA(Met) cytidine acetate ligase (383 aa).

ATP is bound by residues 7–20, Gly101, Asn153, and 178–179; these read IAEF…HEFL and RI.

This sequence belongs to the TmcAL family.

It is found in the cytoplasm. The enzyme catalyses cytidine(34) in elongator tRNA(Met) + acetate + ATP = N(4)-acetylcytidine(34) in elongator tRNA(Met) + AMP + diphosphate. Functionally, catalyzes the formation of N(4)-acetylcytidine (ac(4)C) at the wobble position of elongator tRNA(Met), using acetate and ATP as substrates. First activates an acetate ion to form acetyladenylate (Ac-AMP) and then transfers the acetyl group to tRNA to form ac(4)C34. This is tRNA(Met) cytidine acetate ligase from Lactobacillus helveticus (strain DPC 4571).